We begin with the raw amino-acid sequence, 862 residues long: Protein translocase subunit SecA (862 aa).

ATP-binding positions include glutamine 86, 104-108 (GEGKT), and aspartate 499. Positions 848, 850, 859, and 860 each coordinate Zn(2+).

This sequence belongs to the SecA family. As to quaternary structure, monomer and homodimer. Part of the essential Sec protein translocation apparatus which comprises SecA, SecYEG and auxiliary proteins SecDF-YajC and YidC. Zn(2+) is required as a cofactor.

It localises to the cell inner membrane. It is found in the cytoplasm. The catalysed reaction is ATP + H2O + cellular proteinSide 1 = ADP + phosphate + cellular proteinSide 2.. Part of the Sec protein translocase complex. Interacts with the SecYEG preprotein conducting channel. Has a central role in coupling the hydrolysis of ATP to the transfer of proteins into and across the cell membrane, serving both as a receptor for the preprotein-SecB complex and as an ATP-driven molecular motor driving the stepwise translocation of polypeptide chains across the membrane. In Ehrlichia canis (strain Jake), this protein is Protein translocase subunit SecA.